The following is a 78-amino-acid chain: NAD(P)H-quinone oxidoreductase subunit O (78 aa).

Belongs to the complex I NdhO subunit family. NDH-1 can be composed of about 15 different subunits; different subcomplexes with different compositions have been identified which probably have different functions.

Its subcellular location is the cellular thylakoid membrane. The enzyme catalyses a plastoquinone + NADH + (n+1) H(+)(in) = a plastoquinol + NAD(+) + n H(+)(out). The catalysed reaction is a plastoquinone + NADPH + (n+1) H(+)(in) = a plastoquinol + NADP(+) + n H(+)(out). NDH-1 shuttles electrons from an unknown electron donor, via FMN and iron-sulfur (Fe-S) centers, to quinones in the respiratory and/or the photosynthetic chain. The immediate electron acceptor for the enzyme in this species is believed to be plastoquinone. Couples the redox reaction to proton translocation, and thus conserves the redox energy in a proton gradient. Cyanobacterial NDH-1 also plays a role in inorganic carbon-concentration. In Prochlorococcus marinus (strain MIT 9312), this protein is NAD(P)H-quinone oxidoreductase subunit O.